The chain runs to 96 residues: Protein RnfH (96 aa).

This sequence belongs to the UPF0125 (RnfH) family.

The sequence is that of Protein RnfH from Escherichia coli O139:H28 (strain E24377A / ETEC).